The chain runs to 206 residues: Putative acetyltransferase OgpAT (206 aa).

Positions 5–205 constitute an N-acetyltransferase domain; it reads VVIRRATAAD…EVVVGRRLLD (201 aa). Acetyl-CoA contacts are provided by residues 135-138, 144-148, 175-177, and H184; these read HIDL, GRGVG, and NPR.

Belongs to the acetyltransferase family. In terms of assembly, monomer.

Binds acetyl-CoA, but not butyryl-CoA or decanoyl-CoA. May have acetyltransferase activity. The protein is Putative acetyltransferase OgpAT of Oceanicola granulosus (strain ATCC BAA-861 / DSM 15982 / KCTC 12143 / HTCC2516).